Reading from the N-terminus, the 398-residue chain is Acetate kinase (398 aa).

Mg(2+) is bound at residue Asn-7. Lys-14 provides a ligand contact to ATP. Arg-96 contacts substrate. The active-site Proton donor/acceptor is the Asp-153. Residues 210–214, 284–286, and 332–336 each bind ATP; these read HLGNG, DLR, and GIGEH. Glu-385 contributes to the Mg(2+) binding site.

Belongs to the acetokinase family. Homodimer. Mg(2+) is required as a cofactor. The cofactor is Mn(2+).

The protein localises to the cytoplasm. It catalyses the reaction acetate + ATP = acetyl phosphate + ADP. It participates in metabolic intermediate biosynthesis; acetyl-CoA biosynthesis; acetyl-CoA from acetate: step 1/2. Its function is as follows. Catalyzes the formation of acetyl phosphate from acetate and ATP. Can also catalyze the reverse reaction. The chain is Acetate kinase from Acaryochloris marina (strain MBIC 11017).